A 108-amino-acid polypeptide reads, in one-letter code: Replication restart protein PriB (108 aa).

Residues 11 to 108 (INRNQVIISG…VLHVRDTRII (98 aa)) form the SSB domain.

The protein belongs to the PriB family. As to quaternary structure, homodimer. Interacts with PriA and DnaT. Component of the replication restart primosome. Primosome assembly occurs via a 'hand-off' mechanism. PriA binds to replication forks, subsequently PriB then DnaT bind; DnaT then displaces ssDNA to generate the helicase loading substrate.

In terms of biological role, involved in the restart of stalled replication forks, which reloads the replicative helicase on sites other than the origin of replication; the PriA-PriB pathway is the major replication restart pathway. During primosome assembly it facilitates complex formation between PriA and DnaT on DNA; stabilizes PriA on DNA. Stimulates the DNA unwinding activity of PriA helicase. The chain is Replication restart protein PriB from Nitrosomonas europaea (strain ATCC 19718 / CIP 103999 / KCTC 2705 / NBRC 14298).